The primary structure comprises 289 residues: NAD(P)H-hydrate epimerase (289 aa).

Positions 71-277 (AQTIDNELMS…SIVEKYNLKV (207 aa)) constitute a YjeF N-terminal domain. 122–126 (NNGGD) lines the (6S)-NADPHX pocket. Residues Asn-123 and Asp-185 each contribute to the K(+) site. Residues 189-195 (GFSFTGE) and Asp-218 each bind (6S)-NADPHX. Ser-221 lines the K(+) pocket.

The protein belongs to the NnrE/AIBP family. The cofactor is K(+).

It carries out the reaction (6R)-NADHX = (6S)-NADHX. It catalyses the reaction (6R)-NADPHX = (6S)-NADPHX. Functionally, catalyzes the epimerization of the S- and R-forms of NAD(P)HX, a damaged form of NAD(P)H that is a result of enzymatic or heat-dependent hydration. This is a prerequisite for the S-specific NAD(P)H-hydrate dehydratase to allow the repair of both epimers of NAD(P)HX. This is NAD(P)H-hydrate epimerase from Plasmodium vivax (strain Salvador I).